Consider the following 100-residue polypeptide: uncharacterized protein (100 aa).

This is an uncharacterized protein from Saccharomyces cerevisiae (strain ATCC 204508 / S288c) (Baker's yeast).